A 190-amino-acid polypeptide reads, in one-letter code: Holliday junction branch migration complex subunit RuvA (190 aa).

A domain I region spans residues 1–65 (MIGTLSGTVE…DGVSQLYGFA (65 aa)). Positions 66–137 (NREEQNCMRM…LTPQVQKFEL (72 aa)) are domain II. The segment at 137–141 (LNRFA) is flexible linker. Residues 142-190 (ATTRTDSEAVAALLSLGYERTAALGALQKVGVCDSTEDAVRRALLELSK) form a domain III region.

Belongs to the RuvA family. In terms of assembly, homotetramer. Forms an RuvA(8)-RuvB(12)-Holliday junction (HJ) complex. HJ DNA is sandwiched between 2 RuvA tetramers; dsDNA enters through RuvA and exits via RuvB. An RuvB hexamer assembles on each DNA strand where it exits the tetramer. Each RuvB hexamer is contacted by two RuvA subunits (via domain III) on 2 adjacent RuvB subunits; this complex drives branch migration. In the full resolvosome a probable DNA-RuvA(4)-RuvB(12)-RuvC(2) complex forms which resolves the HJ.

Its subcellular location is the cytoplasm. Its function is as follows. The RuvA-RuvB-RuvC complex processes Holliday junction (HJ) DNA during genetic recombination and DNA repair, while the RuvA-RuvB complex plays an important role in the rescue of blocked DNA replication forks via replication fork reversal (RFR). RuvA specifically binds to HJ cruciform DNA, conferring on it an open structure. The RuvB hexamer acts as an ATP-dependent pump, pulling dsDNA into and through the RuvAB complex. HJ branch migration allows RuvC to scan DNA until it finds its consensus sequence, where it cleaves and resolves the cruciform DNA. The polypeptide is Holliday junction branch migration complex subunit RuvA (Anaplasma marginale (strain Florida)).